The primary structure comprises 869 residues: MDFPSSLRPALFLTGPLGLSDVPDLSFMCSWRDALTLPEAQPQNSENGALHVTKDLLWEPATPGPLPMLPPLIDPWDPGLTARDLLFRGGCRYRKRPRVVLDVTEQISRFLLDHGDVAFAPLGKLMLENFKLEGAGSRTKKKTVVSVKKLLQDLGGHQPWGCPWAYLSNRQRRFSILGGPILGTSVASHLAELLHEELVLRWEQLLLDEACTGGALAWVPGRTPQFGQLVYPAGGAQDRLHFQEVVLTPGDNPQFLGKPGRIQLQGPVRQVVTCTVQGESKALIYTFLPHWLTCYLTPGPFHPSSALLAVRSDYHCAVWKFGKQWQPTLLQAMQVEKGATGISLSPHLPGELAICSRSGAVCLWSPEDGLRQIYRDPETLVFRDSSSWRWADFTAHPRVLTVGDRTGVKMLDTQGPPGCGLLLFRLGAEASCQKGERVLLTQYLGHSSPKCLPPTLHLVCTQFSLYLVDERLPLVPMLKWNHGLPSPLLLARLLPPPRPSCVQPLLLGGQGGQLQLLHLAGEGASVPRLAGPPQSLPSRIDSLPAFPLLEPKIQWRLQERLKAPTIGLAAVVPPLPSAPTPGLVLFQLSAAGDVFYQQLRPQVDSSLRRDAGPPGDTQPDCHAPTASWTSQDTAGCSQWLKALLKVPLAPPVWTAPTFTHRQMLGSTELRREEEEGQRLGVLRKAMARGQLLLQRDLGSLPAAEPPPAPESGLEDKLSERLGEAWAGRGAAWWERQQGRTSEPGRQTRRPKRRTQLSSSFSLSGHVDPSEDTSSPHSPEWPPADALPLPPTTPPSQELTPDACAQGVPSEQRQMLRDYMAKLPPQRDTPGCATTPPHSQASSVRATRSQQHTPVLSSSQPLRKKPRMGF.

2 disordered regions span residues 605–629 (SSLR…ASWT) and 729–869 (GAAW…RMGF). A Phosphothreonine modification is found at Thr834. Polar residues predominate over residues 835-860 (PPHSQASSVRATRSQQHTPVLSSSQP). The residue at position 848 (Ser848) is a Phosphoserine.

In terms of assembly, component of the transcription factor SL1/TIF-IB complex, composed of TBP and at least TAF1A, TAF1B, TAF1C and TAF1D. In the complex interacts directly with TBP, TAF1A and TAF1B. Interaction of the SL1/TIF-IB subunits with TBP excludes interaction of TBP with the transcription factor IID (TFIID) subunits. Interacts with MYC and RRN3. Interacts with p53/TP53; the interaction prevents the association of SL1/TIF-IB with UBTF and represses RNA polymerase I transcription. Part of Pol I pre-initiation complex (PIC), in which Pol I core assembles with RRN3 and promoter-bound UTBF and SL1/TIF-IB complex.

It is found in the nucleus. It localises to the nucleolus. Functionally, component of the transcription factor SL1/TIF-IB complex, which is involved in the assembly of the PIC (pre-initiation complex) during RNA polymerase I-dependent transcription. The rate of PIC formation probably is primarily dependent on the rate of association of SL1/TIF-IB with the rDNA promoter. SL1/TIF-IB is involved in stabilization of nucleolar transcription factor 1/UBTF on rDNA. Formation of SL1/TIF-IB excludes the association of TBP with TFIID subunits. Recruits RNA polymerase I to the rRNA gene promoter via interaction with RRN3. In Homo sapiens (Human), this protein is TATA box-binding protein-associated factor RNA polymerase I subunit C (TAF1C).